The sequence spans 711 residues: MKQLFATTSRGFEELLKVELTELGAQEAKVVQGGVHYQADDETLYRTLLWSRLASRILFPLIETKIYSDLDLYAAVSGFNWLGLFDERVTFFVDFNGTNQEIRHTQFGAMRVKDGIVDYFERQGKARPDVDKIQPDVRIHAYLNRENLVISLDLSGEALHLRGYREDAGQAPLRETLAAAIVLRSGWQVGSPLVDPMCGSGTLLIEAAQMEAKIAPQLYRLHWGFDFWKAHNQSAWEKVKNEAIELAEEKQREIQPHFYGFDLDHRVLKKAQKNAQNAGVSHLIKWQQGDVAALKNPRLNEVGTVICNPPYGERLGTTPALIALYSVFGQRLKKEFCGWNVSVFSSESTLLDCLRMRASRQFKAKNGPLDCVQKNYQVSERKSDEITAENELEFNRTSEVATDFANRLQKNIKKISKWAKQQGLDAYRLYDADLPEYNLAVDRYADYIVVQEYAAPKNIDENKARQRLLDAVTATLHVTGVETNKLILKVRQKQKGTNQYEKLANKGEYFYVNEYGAQLWVNLTDYLDTGLFLDHRLTRKMIGALAKGKDFLNLFAYTGSATVHAALGGAKSTTTVDMSNTYLNWAEQNLILNDIEGKQHKLIQADCLQWLEKCDRQFDLIFVDPPTFSNSKRMEDSWDVQRDHVKLMRNLKRVLSNNGTIVFSNNKRGFKMNLVALEELGLSAVEISHKTLPLDFERNKQIHNCWMIQHI.

The THUMP domain maps to 43-154 (TLYRTLLWSR…RENLVISLDL (112 aa)).

This sequence belongs to the methyltransferase superfamily. RlmKL family.

The protein resides in the cytoplasm. The enzyme catalyses guanosine(2445) in 23S rRNA + S-adenosyl-L-methionine = N(2)-methylguanosine(2445) in 23S rRNA + S-adenosyl-L-homocysteine + H(+). It catalyses the reaction guanosine(2069) in 23S rRNA + S-adenosyl-L-methionine = N(2)-methylguanosine(2069) in 23S rRNA + S-adenosyl-L-homocysteine + H(+). Functionally, specifically methylates the guanine in position 2445 (m2G2445) and the guanine in position 2069 (m7G2069) of 23S rRNA. In Haemophilus influenzae (strain 86-028NP), this protein is Ribosomal RNA large subunit methyltransferase K/L.